We begin with the raw amino-acid sequence, 98 residues long: Large ribosomal subunit protein bL27 (98 aa).

The interval 1 to 22 is disordered; the sequence is MAHKKGTGSTRNGRDSNAQRLG. Residues 7–19 are compositionally biased toward polar residues; sequence TGSTRNGRDSNAQ.

Belongs to the bacterial ribosomal protein bL27 family.

This chain is Large ribosomal subunit protein bL27, found in Nostoc punctiforme (strain ATCC 29133 / PCC 73102).